The following is a 202-amino-acid chain: MNYKDIINACILSGVFLLHSPSALADTPSVGVSKGQESLQPAAEGNLWQRLIRNVSLAWNSPHQELYIPVNTWHNRWTYDDEKIASYNERPWGVGYGKYRYDEDNNWHSVYAMAFMDSHNRVEPILGYGYQKMWIPGEREGWRFGAGFTASITARYEYHYIPLPLPLPLISIEYNRLSLQTTYIPGTYNNGNVLFTWIRWQF.

Positions 1–25 are cleaved as a signal peptide; sequence MNYKDIINACILSGVFLLHSPSALA. Catalysis depends on residues histidine 74, aspartate 117, and serine 118.

It belongs to the lipid A palmitoyltransferase family. In terms of assembly, homodimer.

Its subcellular location is the cell outer membrane. It catalyses the reaction a lipid A + a 1,2-diacyl-sn-glycero-3-phosphocholine = a hepta-acyl lipid A + a 2-acyl-sn-glycero-3-phosphocholine. The catalysed reaction is a lipid IVA + a 1,2-diacyl-sn-glycero-3-phosphocholine = a lipid IVB + a 2-acyl-sn-glycero-3-phosphocholine. The enzyme catalyses a lipid IIA + a 1,2-diacyl-sn-glycero-3-phosphocholine = a lipid IIB + a 2-acyl-sn-glycero-3-phosphocholine. Its function is as follows. Transfers a fatty acid residue from the sn-1 position of a phospholipid to the N-linked hydroxyfatty acid chain on the proximal unit of lipid A or its precursors. The sequence is that of Lipid A acyltransferase PagP from Yersinia pseudotuberculosis serotype IB (strain PB1/+).